Consider the following 656-residue polypeptide: F-box/LRR-repeat protein 10 (656 aa).

Positions 20-66 (ERSLDLLPAALLETIMTKLDVASLCSLASTCKTLKSCVTRVLTFTPN) constitute an F-box domain. LRR repeat units follow at residues 71-96 (NVSL…KLDC), 120-145 (CRDF…CLGS), 151-176 (GRSI…ALMF), 194-221 (SDRL…EISG), 243-268 (VDCI…DIRD), 277-301 (VSDL…SLIR), 310-335 (FRRV…CLGG), 336-361 (FCRV…SIYH), 362-387 (GPKL…SLRR), 388-412 (CHLL…DLRG), 413-437 (CRNL…LLDG), 439-463 (DISD…SVRG), 464-491 (CRNL…DLSN), 492-517 (LPNL…QLRE), 518-551 (CRLI…DLYD), and 552-578 (CGGI…GITG). A disordered region spans residues 632-656 (ILGDEGDVEMEDAEDESEEDASEED).

This is F-box/LRR-repeat protein 10 (FBL10) from Arabidopsis thaliana (Mouse-ear cress).